Here is a 545-residue protein sequence, read N- to C-terminus: Chaperonin GroEL (545 aa).

Residues 30–33, Lys-51, 87–91, Gly-415, and Asp-494 each bind ATP; these read TMGP and DGTTT.

The protein belongs to the chaperonin (HSP60) family. Forms a cylinder of 14 subunits composed of two heptameric rings stacked back-to-back. Interacts with the co-chaperonin GroES.

It is found in the cytoplasm. The catalysed reaction is ATP + H2O + a folded polypeptide = ADP + phosphate + an unfolded polypeptide.. In terms of biological role, together with its co-chaperonin GroES, plays an essential role in assisting protein folding. The GroEL-GroES system forms a nano-cage that allows encapsulation of the non-native substrate proteins and provides a physical environment optimized to promote and accelerate protein folding. The polypeptide is Chaperonin GroEL (Helicobacter hepaticus (strain ATCC 51449 / 3B1)).